The sequence spans 132 residues: Fatty acid-binding protein, brain (132 aa).

Val2 is subject to N-acetylvaline. Residue 127–129 participates in a fatty acid binding; sequence RHY.

This sequence belongs to the calycin superfamily. Fatty-acid binding protein (FABP) family. As to quaternary structure, monomer.

Its subcellular location is the cytoplasm. Functionally, FABPs are thought to play a role in the intracellular transport of long-chain fatty acids and their acyl-CoA esters. Binds oleic and palmitic acids but not palmitoyl CoA. This Bos taurus (Bovine) protein is Fatty acid-binding protein, brain (FABP7).